The following is a 381-amino-acid chain: Peptidoglycan glycosyltransferase MrdB (381 aa).

10 helical membrane passes run 11 to 31 (FDLLPFVFIIPLLVVSFLLIF), 40 to 60 (KQGVYYAIGFILFWIVFFIPF), 66 to 86 (WLFVFYWACVILLALVDFMGY), 99 to 119 (FISITLQPSEPVKIAILLLLA), 132 to 152 (YDWGMFLKLSFYICLPAALIL), 156 to 176 (DLGTALIVLIMGFGILLIVGL), 180 to 200 (VWLPLFIALLVASPIAYHFLH), 263 to 283 (FGFLGAMLLFAIYIGLSLHLF), 297 to 317 (IVALGISILIFVYSSVNIAMT), and 328 to 348 (LPLFSYGGSSFITFMILFGIL).

This sequence belongs to the SEDS family. MrdB/RodA subfamily.

The protein localises to the cell inner membrane. The catalysed reaction is [GlcNAc-(1-&gt;4)-Mur2Ac(oyl-L-Ala-gamma-D-Glu-L-Lys-D-Ala-D-Ala)](n)-di-trans,octa-cis-undecaprenyl diphosphate + beta-D-GlcNAc-(1-&gt;4)-Mur2Ac(oyl-L-Ala-gamma-D-Glu-L-Lys-D-Ala-D-Ala)-di-trans,octa-cis-undecaprenyl diphosphate = [GlcNAc-(1-&gt;4)-Mur2Ac(oyl-L-Ala-gamma-D-Glu-L-Lys-D-Ala-D-Ala)](n+1)-di-trans,octa-cis-undecaprenyl diphosphate + di-trans,octa-cis-undecaprenyl diphosphate + H(+). Its pathway is cell wall biogenesis; peptidoglycan biosynthesis. Its function is as follows. Peptidoglycan polymerase that is essential for cell wall elongation. The sequence is that of Peptidoglycan glycosyltransferase MrdB from Helicobacter pylori (strain ATCC 700392 / 26695) (Campylobacter pylori).